The following is a 447-amino-acid chain: Methionine aminopeptidase 2-2 (447 aa).

A disordered region spans residues 1–89 (MAAQTAPELA…PRIPLTTLFP (89 aa)). Polar residues predominate over residues 15–30 (NKNSGSAEANVVSNGG). Positions 34-47 (DDAENEGDSDDDKD) are enriched in acidic residues. Residues 59 to 73 (KKKKKKRSKKKKKAA) are compositionally biased toward basic residues. Residue His-197 participates in substrate binding. Positions 217, 228, and 297 each coordinate a divalent metal cation. His-305 contacts substrate. The a divalent metal cation site is built by Glu-333 and Glu-428.

It belongs to the peptidase M24A family. Methionine aminopeptidase eukaryotic type 2 subfamily. Co(2+) is required as a cofactor. It depends on Zn(2+) as a cofactor. Mn(2+) serves as cofactor. The cofactor is Fe(2+).

It is found in the cytoplasm. It catalyses the reaction Release of N-terminal amino acids, preferentially methionine, from peptides and arylamides.. In terms of biological role, cotranslationally removes the N-terminal methionine from nascent proteins. The N-terminal methionine is often cleaved when the second residue in the primary sequence is small and uncharged (Met-Ala-, Cys, Gly, Pro, Ser, Thr, or Val). This is Methionine aminopeptidase 2-2 from Arthroderma otae (strain ATCC MYA-4605 / CBS 113480) (Microsporum canis).